Here is a 567-residue protein sequence, read N- to C-terminus: Urease subunit alpha (567 aa).

The Urease domain occupies glycine 130–phenylalanine 567. 3 residues coordinate Ni(2+): histidine 135, histidine 137, and lysine 218. Lysine 218 is subject to N6-carboxylysine. Histidine 220 contributes to the substrate binding site. Residues histidine 247 and histidine 273 each contribute to the Ni(2+) site. The Proton donor role is filled by histidine 321. Residue aspartate 361 coordinates Ni(2+).

It belongs to the metallo-dependent hydrolases superfamily. Urease alpha subunit family. Heterotrimer of UreA (gamma), UreB (beta) and UreC (alpha) subunits. Three heterotrimers associate to form the active enzyme. It depends on Ni cation as a cofactor. Post-translationally, carboxylation allows a single lysine to coordinate two nickel ions.

It localises to the cytoplasm. It catalyses the reaction urea + 2 H2O + H(+) = hydrogencarbonate + 2 NH4(+). It functions in the pathway nitrogen metabolism; urea degradation; CO(2) and NH(3) from urea (urease route): step 1/1. This is Urease subunit alpha from Methylobacillus flagellatus (strain ATCC 51484 / DSM 6875 / VKM B-1610 / KT).